The sequence spans 127 residues: Small ribosomal subunit protein uS12 (127 aa).

A 3-methylthioaspartic acid modification is found at D89. Positions 102-127 are disordered; that stretch reads LDTAGVKDRKQGRSKYGTKRPKEAKK. The segment covering 113 to 127 has biased composition (basic residues); the sequence is GRSKYGTKRPKEAKK.

It belongs to the universal ribosomal protein uS12 family. As to quaternary structure, part of the 30S ribosomal subunit. Contacts proteins S8 and S17. May interact with IF1 in the 30S initiation complex.

Functionally, with S4 and S5 plays an important role in translational accuracy. Its function is as follows. Interacts with and stabilizes bases of the 16S rRNA that are involved in tRNA selection in the A site and with the mRNA backbone. Located at the interface of the 30S and 50S subunits, it traverses the body of the 30S subunit contacting proteins on the other side and probably holding the rRNA structure together. The combined cluster of proteins S8, S12 and S17 appears to hold together the shoulder and platform of the 30S subunit. This is Small ribosomal subunit protein uS12 from Nostoc punctiforme (strain ATCC 29133 / PCC 73102).